The following is a 293-amino-acid chain: Nucleotide-binding protein CKR_3143 (293 aa).

8–15 (GLSGAGKT) contacts ATP. 59–62 (DIRG) provides a ligand contact to GTP.

This sequence belongs to the RapZ-like family.

Its function is as follows. Displays ATPase and GTPase activities. The sequence is that of Nucleotide-binding protein CKR_3143 from Clostridium kluyveri (strain NBRC 12016).